We begin with the raw amino-acid sequence, 304 residues long: N-acetyl-D-glucosamine kinase (304 aa).

ATP-binding positions include 4 to 11 and 133 to 140; these read GFDMGGTK and GLGGGLVI. 4 residues coordinate Zn(2+): H157, C177, C179, and C184.

This sequence belongs to the ROK (NagC/XylR) family. NagK subfamily.

The enzyme catalyses N-acetyl-D-glucosamine + ATP = N-acetyl-D-glucosamine 6-phosphate + ADP + H(+). The protein operates within cell wall biogenesis; peptidoglycan recycling. Catalyzes the phosphorylation of N-acetyl-D-glucosamine (GlcNAc) derived from cell-wall degradation, yielding GlcNAc-6-P. The chain is N-acetyl-D-glucosamine kinase from Pectobacterium atrosepticum (strain SCRI 1043 / ATCC BAA-672) (Erwinia carotovora subsp. atroseptica).